Here is a 307-residue protein sequence, read N- to C-terminus: Elongation factor Ts (307 aa).

An involved in Mg(2+) ion dislocation from EF-Tu region spans residues 80–83 (TDFV).

Belongs to the EF-Ts family.

Its subcellular location is the cytoplasm. Associates with the EF-Tu.GDP complex and induces the exchange of GDP to GTP. It remains bound to the aminoacyl-tRNA.EF-Tu.GTP complex up to the GTP hydrolysis stage on the ribosome. The polypeptide is Elongation factor Ts (Rhodospirillum centenum (strain ATCC 51521 / SW)).